Reading from the N-terminus, the 102-residue chain is Thioredoxin (102 aa).

Positions 2 to 102 (VTEIKSLKQL…KAKIVQLVSQ (101 aa)) constitute a Thioredoxin domain. Residues Cys-30 and Cys-33 are joined by a disulfide bond.

It belongs to the thioredoxin family.

Functionally, participates in various redox reactions through the reversible oxidation of its active center dithiol to a disulfide and catalyzes dithiol-disulfide exchange reactions. The polypeptide is Thioredoxin (trxA) (Mycoplasma pneumoniae (strain ATCC 29342 / M129 / Subtype 1) (Mycoplasmoides pneumoniae)).